We begin with the raw amino-acid sequence, 69 residues long: Protein translocase subunit SecE (69 aa).

The helical transmembrane segment at 43 to 63 (GLGICLLGFVGFVIHVPITYL) threads the bilayer.

This sequence belongs to the SecE/SEC61-gamma family. As to quaternary structure, component of the Sec protein translocase complex. Heterotrimer consisting of SecY (alpha), SecG (beta) and SecE (gamma) subunits. The heterotrimers can form oligomers, although 1 heterotrimer is thought to be able to translocate proteins. Interacts with the ribosome. May interact with SecDF, and other proteins may be involved.

The protein resides in the cell membrane. Essential subunit of the Sec protein translocation channel SecYEG. Clamps together the 2 halves of SecY. May contact the channel plug during translocation. In Methanococcus maripaludis (strain DSM 14266 / JCM 13030 / NBRC 101832 / S2 / LL), this protein is Protein translocase subunit SecE.